The following is a 61-amino-acid chain: MMTNLNIKLHHGLVNSTPKQRAAAQTLGLNKIGKTVTREDTPALRGQLQVLRHLITVEEAD.

It belongs to the universal ribosomal protein uL30 family. Part of the 50S ribosomal subunit.

The polypeptide is Large ribosomal subunit protein uL30 (Bifidobacterium adolescentis (strain ATCC 15703 / DSM 20083 / NCTC 11814 / E194a)).